The primary structure comprises 357 residues: Histidinol-phosphate aminotransferase (357 aa).

The residue at position 218 (Lys218) is an N6-(pyridoxal phosphate)lysine.

The protein belongs to the class-II pyridoxal-phosphate-dependent aminotransferase family. Histidinol-phosphate aminotransferase subfamily. As to quaternary structure, homodimer. The cofactor is pyridoxal 5'-phosphate.

It carries out the reaction L-histidinol phosphate + 2-oxoglutarate = 3-(imidazol-4-yl)-2-oxopropyl phosphate + L-glutamate. The protein operates within amino-acid biosynthesis; L-histidine biosynthesis; L-histidine from 5-phospho-alpha-D-ribose 1-diphosphate: step 7/9. The protein is Histidinol-phosphate aminotransferase of Chlorobium luteolum (strain DSM 273 / BCRC 81028 / 2530) (Pelodictyon luteolum).